The chain runs to 223 residues: Putative synaptogyrin-2 like protein (223 aa).

An N-acetylmethionine modification is found at Met-1. A Phosphoserine modification is found at Ser-3. Residues 20 to 170 form the MARVEL domain; that stretch reads FLTQPQVVAR…LASLTYQRYK (151 aa). The next 4 helical transmembrane spans lie at 26–46, 71–91, 104–124, and 146–166; these read VVAR…IYGE, GSAI…DAYF, VIGD…GFCF, and AAIT…SLTY. Residues 197-223 are disordered; sequence ASVDNYQQPPFTQNAETTEGYQPPPVY. The span at 200-216 shows a compositional bias: polar residues; the sequence is DNYQQPPFTQNAETTEG.

Belongs to the synaptogyrin family.

Its subcellular location is the membrane. The polypeptide is Putative synaptogyrin-2 like protein (Homo sapiens (Human)).